The primary structure comprises 425 residues: Histidine--tRNA ligase (425 aa).

This sequence belongs to the class-II aminoacyl-tRNA synthetase family. In terms of assembly, homodimer.

It is found in the cytoplasm. It catalyses the reaction tRNA(His) + L-histidine + ATP = L-histidyl-tRNA(His) + AMP + diphosphate + H(+). The sequence is that of Histidine--tRNA ligase from Streptomyces coelicolor (strain ATCC BAA-471 / A3(2) / M145).